The following is a 211-amino-acid chain: Thiamine-phosphate synthase (211 aa).

Residues 39–41 and asparagine 71 contribute to the 4-amino-2-methyl-5-(diphosphooxymethyl)pyrimidine site; that span reads QLR. Mg(2+)-binding residues include aspartate 72 and aspartate 91. Serine 110 serves as a coordination point for 4-amino-2-methyl-5-(diphosphooxymethyl)pyrimidine. 136–138 lines the 2-[(2R,5Z)-2-carboxy-4-methylthiazol-5(2H)-ylidene]ethyl phosphate pocket; sequence TGT. Lysine 139 provides a ligand contact to 4-amino-2-methyl-5-(diphosphooxymethyl)pyrimidine. Residues glycine 167 and 187–188 contribute to the 2-[(2R,5Z)-2-carboxy-4-methylthiazol-5(2H)-ylidene]ethyl phosphate site; that span reads VS.

This sequence belongs to the thiamine-phosphate synthase family. The cofactor is Mg(2+).

It carries out the reaction 2-[(2R,5Z)-2-carboxy-4-methylthiazol-5(2H)-ylidene]ethyl phosphate + 4-amino-2-methyl-5-(diphosphooxymethyl)pyrimidine + 2 H(+) = thiamine phosphate + CO2 + diphosphate. The catalysed reaction is 2-(2-carboxy-4-methylthiazol-5-yl)ethyl phosphate + 4-amino-2-methyl-5-(diphosphooxymethyl)pyrimidine + 2 H(+) = thiamine phosphate + CO2 + diphosphate. It catalyses the reaction 4-methyl-5-(2-phosphooxyethyl)-thiazole + 4-amino-2-methyl-5-(diphosphooxymethyl)pyrimidine + H(+) = thiamine phosphate + diphosphate. It functions in the pathway cofactor biosynthesis; thiamine diphosphate biosynthesis; thiamine phosphate from 4-amino-2-methyl-5-diphosphomethylpyrimidine and 4-methyl-5-(2-phosphoethyl)-thiazole: step 1/1. Its function is as follows. Condenses 4-methyl-5-(beta-hydroxyethyl)thiazole monophosphate (THZ-P) and 2-methyl-4-amino-5-hydroxymethyl pyrimidine pyrophosphate (HMP-PP) to form thiamine monophosphate (TMP). This is Thiamine-phosphate synthase from Xanthobacter autotrophicus (strain ATCC BAA-1158 / Py2).